Consider the following 65-residue polypeptide: Conotoxin Cal16.1 (65 aa).

An N-terminal signal peptide occupies residues 1-19; it reads MRCLSIFVLLVLLVSFAVA. Positions 20 to 48 are excised as a propeptide; the sequence is ELDVEGEIVKQLLTRGTLKDADFWKRLEM. Glutamine 49 is modified (pyrrolidone carboxylic acid). Cystine bridges form between cysteine 51–cysteine 60 and cysteine 53–cysteine 61. Glutamate 63 bears the Glutamic acid 1-amide mark.

Expressed by the venom duct.

The protein resides in the secreted. In terms of biological role, probable neurotoxin with unknown target. Possibly targets ion channels. This is Conotoxin Cal16.1 from Californiconus californicus (California cone).